We begin with the raw amino-acid sequence, 121 residues long: Large ribosomal subunit protein uL22c (121 aa).

This sequence belongs to the universal ribosomal protein uL22 family. Part of the 50S ribosomal subunit.

The protein localises to the plastid. It is found in the chloroplast. Its function is as follows. This protein binds specifically to 23S rRNA. In terms of biological role, the globular domain of the protein is located near the polypeptide exit tunnel on the outside of the subunit, while an extended beta-hairpin is found that lines the wall of the exit tunnel in the center of the 70S ribosome. The protein is Large ribosomal subunit protein uL22c (rpl22) of Guillardia theta (Cryptophyte).